Reading from the N-terminus, the 396-residue chain is MAKEKFERKKPHCNIGTIGHVDHGKTSLTAAITKVLAEAGGATFTAYDQIDKAPEEKARGITISTSHVEYETPNRHYAHVDCPGHADYVKNMITGAAQMDGAILVVSAADGPMPQTREHILLARQVGVPAIVVFLNKCDMVDDPELLELVELEVRELLSKYNFPGDKIPIIKGSALAALENSDEKLGRDAVLELMKNVDEYIPQPERPVDQPFLMPVEDVFSISGRGTVVTGRVERGIVKVGEEIEIVGIRPTQKTTVTGVEMFRKLLDQGQAGDNIGALLRGTKREDVERGQVLCKPGSVKPHTKFKAEAYILTKEEGGRHTPFFTNYRPQFYFRTTDVTGVVHLPEGTEMVMPGDNIAMEVHLIVPIAMEEKLRFAIREGGRTVGAGVVASIIE.

One can recognise a tr-type G domain in the interval Lys-10–Glu-206. Residues Gly-19–Thr-26 form a G1 region. Gly-19 to Thr-26 provides a ligand contact to GTP. Thr-26 is a binding site for Mg(2+). The G2 stretch occupies residues Gly-60–Ser-64. The tract at residues Asp-81–Gly-84 is G3. GTP is bound by residues Asp-81–His-85 and Asn-136–Asp-139. Positions Asn-136–Asp-139 are G4. The G5 stretch occupies residues Ser-174–Leu-176.

The protein belongs to the TRAFAC class translation factor GTPase superfamily. Classic translation factor GTPase family. EF-Tu/EF-1A subfamily. As to quaternary structure, monomer.

The protein resides in the cytoplasm. The catalysed reaction is GTP + H2O = GDP + phosphate + H(+). Functionally, GTP hydrolase that promotes the GTP-dependent binding of aminoacyl-tRNA to the A-site of ribosomes during protein biosynthesis. The sequence is that of Elongation factor Tu from Afipia carboxidovorans (strain ATCC 49405 / DSM 1227 / KCTC 32145 / OM5) (Oligotropha carboxidovorans).